The primary structure comprises 515 residues: Zinc metalloproteinase-disintegrin BA-5A (515 aa).

Residues 1-20 (MMQVLLVTICLAVFPYQGSS) form the signal peptide. The propeptide occupies 21–193 (IILESGNVND…KEASQLVATS (173 aa)). The 197-residue stretch at 203–399 (RYIKYFIVVD…YKPDCTLIRP (197 aa)) folds into the Peptidase M12B domain. Asn-263 carries an N-linked (GlcNAc...) asparagine glycan. 11 cysteine pairs are disulfide-bonded: Cys-314-Cys-394, Cys-354-Cys-378, Cys-356-Cys-361, Cys-410-Cys-429, Cys-421-Cys-439, Cys-423-Cys-434, Cys-433-Cys-456, Cys-447-Cys-453, Cys-452-Cys-478, Cys-465-Cys-485, and Cys-472-Cys-497. His-339 serves as a coordination point for Zn(2+). Residue Glu-340 is part of the active site. Residues His-343 and His-349 each contribute to the Zn(2+) site. Asn-377 is a glycosylation site (N-linked (GlcNAc...) asparagine). One can recognise a Disintegrin domain in the interval 407–493 (PPVCGNDILE…DCPIDHFHRN (87 aa)). The D/ECD-tripeptide motif lies at 471–473 (ECD).

The protein belongs to the venom metalloproteinase (M12B) family. P-II subfamily. Monomer. It depends on Zn(2+) as a cofactor. Expressed by the venom gland.

It is found in the secreted. Functionally, snake venom zinc metalloprotease that possesses hemorrhagic activity and degrades alpha chain of fibrinogen (FGA). May inhibit alpha-2/beta-1 integrin (ITGA2/ITGB1). This chain is Zinc metalloproteinase-disintegrin BA-5A, found in Bitis arietans (African puff adder).